A 600-amino-acid polypeptide reads, in one-letter code: Cytidine monophosphate-N-acetylneuraminic acid hydroxylase (600 aa).

Residues 9-107 form the Rieske domain; sequence LSPVEVASLK…VEMDENNRLL (99 aa). Residues Cys-49, His-51, Cys-70, and His-73 each contribute to the [2Fe-2S] cluster site.

Belongs to the CMP-Neu5Ac hydroxylase family. [2Fe-2S] cluster is required as a cofactor.

The protein resides in the cytoplasm. The enzyme catalyses CMP-N-acetyl-beta-neuraminate + 2 Fe(II)-[cytochrome b5] + O2 + 2 H(+) = CMP-N-glycoloyl-beta-neuraminate + 2 Fe(III)-[cytochrome b5] + H2O. Its pathway is amino-sugar metabolism; N-acetylneuraminate metabolism. In terms of biological role, sialic acids are components of carbohydrate chains of glycoconjugates and are involved in cell-cell recognition and cell-pathogen interactions. Catalyzes the conversion of CMP-N-acetylneuraminic acid (CMP-Neu5Ac) into its hydroxylated derivative CMP-N-glycolylneuraminic acid (CMP-Neu5Gc), a sialic acid abundantly expressed at the surface of many cells. The polypeptide is Cytidine monophosphate-N-acetylneuraminic acid hydroxylase (CMAH) (Gorilla gorilla gorilla (Western lowland gorilla)).